A 100-amino-acid polypeptide reads, in one-letter code: Aspartyl/glutamyl-tRNA(Asn/Gln) amidotransferase subunit C (100 aa).

It belongs to the GatC family. As to quaternary structure, heterotrimer of A, B and C subunits.

The catalysed reaction is L-glutamyl-tRNA(Gln) + L-glutamine + ATP + H2O = L-glutaminyl-tRNA(Gln) + L-glutamate + ADP + phosphate + H(+). It carries out the reaction L-aspartyl-tRNA(Asn) + L-glutamine + ATP + H2O = L-asparaginyl-tRNA(Asn) + L-glutamate + ADP + phosphate + 2 H(+). In terms of biological role, allows the formation of correctly charged Asn-tRNA(Asn) or Gln-tRNA(Gln) through the transamidation of misacylated Asp-tRNA(Asn) or Glu-tRNA(Gln) in organisms which lack either or both of asparaginyl-tRNA or glutaminyl-tRNA synthetases. The reaction takes place in the presence of glutamine and ATP through an activated phospho-Asp-tRNA(Asn) or phospho-Glu-tRNA(Gln). This Staphylococcus aureus (strain Newman) protein is Aspartyl/glutamyl-tRNA(Asn/Gln) amidotransferase subunit C.